The following is a 314-amino-acid chain: Phosphoribosylaminoimidazole-succinocarboxamide synthase (314 aa).

This sequence belongs to the SAICAR synthetase family.

It catalyses the reaction 5-amino-1-(5-phospho-D-ribosyl)imidazole-4-carboxylate + L-aspartate + ATP = (2S)-2-[5-amino-1-(5-phospho-beta-D-ribosyl)imidazole-4-carboxamido]succinate + ADP + phosphate + 2 H(+). Its pathway is purine metabolism; IMP biosynthesis via de novo pathway; 5-amino-1-(5-phospho-D-ribosyl)imidazole-4-carboxamide from 5-amino-1-(5-phospho-D-ribosyl)imidazole-4-carboxylate: step 1/2. This chain is Phosphoribosylaminoimidazole-succinocarboxamide synthase, found in Bacteroides fragilis (strain ATCC 25285 / DSM 2151 / CCUG 4856 / JCM 11019 / LMG 10263 / NCTC 9343 / Onslow / VPI 2553 / EN-2).